The chain runs to 473 residues: Siroheme synthase (473 aa).

The segment at 1-203 (MTLFPIFADL…QQPGLAEQEL (203 aa)) is precorrin-2 dehydrogenase /sirohydrochlorin ferrochelatase. NAD(+) contacts are provided by residues 22 to 23 (AV) and 43 to 44 (PR). Ser128 carries the phosphoserine modification. Positions 216 to 473 (GSVVLVGAGP…GLPGPQALAA (258 aa)) are uroporphyrinogen-III C-methyltransferase. Pro225 lines the S-adenosyl-L-methionine pocket. Asp248 (proton acceptor) is an active-site residue. Residue Lys270 is the Proton donor of the active site. S-adenosyl-L-methionine is bound by residues 302–304 (GGD), Ile307, 332–333 (TA), Met384, and Gly413.

In the N-terminal section; belongs to the precorrin-2 dehydrogenase / sirohydrochlorin ferrochelatase family. This sequence in the C-terminal section; belongs to the precorrin methyltransferase family.

It catalyses the reaction uroporphyrinogen III + 2 S-adenosyl-L-methionine = precorrin-2 + 2 S-adenosyl-L-homocysteine + H(+). The enzyme catalyses precorrin-2 + NAD(+) = sirohydrochlorin + NADH + 2 H(+). The catalysed reaction is siroheme + 2 H(+) = sirohydrochlorin + Fe(2+). It functions in the pathway cofactor biosynthesis; adenosylcobalamin biosynthesis; precorrin-2 from uroporphyrinogen III: step 1/1. It participates in cofactor biosynthesis; adenosylcobalamin biosynthesis; sirohydrochlorin from precorrin-2: step 1/1. The protein operates within porphyrin-containing compound metabolism; siroheme biosynthesis; precorrin-2 from uroporphyrinogen III: step 1/1. Its pathway is porphyrin-containing compound metabolism; siroheme biosynthesis; siroheme from sirohydrochlorin: step 1/1. It functions in the pathway porphyrin-containing compound metabolism; siroheme biosynthesis; sirohydrochlorin from precorrin-2: step 1/1. Multifunctional enzyme that catalyzes the SAM-dependent methylations of uroporphyrinogen III at position C-2 and C-7 to form precorrin-2 via precorrin-1. Then it catalyzes the NAD-dependent ring dehydrogenation of precorrin-2 to yield sirohydrochlorin. Finally, it catalyzes the ferrochelation of sirohydrochlorin to yield siroheme. This is Siroheme synthase from Bordetella parapertussis (strain 12822 / ATCC BAA-587 / NCTC 13253).